We begin with the raw amino-acid sequence, 128 residues long: Large ribosomal subunit protein bL12 (128 aa).

The protein belongs to the bacterial ribosomal protein bL12 family. In terms of assembly, homodimer. Part of the ribosomal stalk of the 50S ribosomal subunit. Forms a multimeric L10(L12)X complex, where L10 forms an elongated spine to which 2 to 4 L12 dimers bind in a sequential fashion. Binds GTP-bound translation factors.

Its function is as follows. Forms part of the ribosomal stalk which helps the ribosome interact with GTP-bound translation factors. Is thus essential for accurate translation. This Synechococcus sp. (strain CC9311) protein is Large ribosomal subunit protein bL12.